A 319-amino-acid polypeptide reads, in one-letter code: N-acyl-aromatic-L-amino acid amidohydrolase (carboxylate-forming) (319 aa).

The interval 1-210 (MCSLPGSRKP…SILDFIELFN (210 aa)) is hydrolytic domain. Positions 21 and 24 each coordinate Zn(2+). Substrate contacts are provided by residues R63 and 70–71 (NR). H116 serves as a coordination point for Zn(2+). E178 and Y288 together coordinate substrate. The segment at 211-318 (QGMEFPAFEM…PGLTPSSTQT (108 aa)) is shielding domain. A Phosphothreonine modification is found at T318.

It belongs to the AspA/AstE family. Aspartoacylase subfamily. As to quaternary structure, exists as a mixture of homodimers and homotetramer, both catalytically active. It depends on Zn(2+) as a cofactor.

Its subcellular location is the apical cell membrane. It is found in the cytoplasm. It carries out the reaction an N-acyl-aromatic L-alpha-amino acid + H2O = an aromatic L-alpha-amino acid + a carboxylate. It catalyses the reaction an N-acetyl-L-cysteine-S-conjugate + H2O = an S-substituted L-cysteine + acetate. Functionally, plays an important role in deacetylating mercapturic acids in kidney proximal tubules. Also acts on N-acetyl-aromatic amino acids. This is N-acyl-aromatic-L-amino acid amidohydrolase (carboxylate-forming) (Acy3) from Rattus norvegicus (Rat).